Here is a 442-residue protein sequence, read N- to C-terminus: tRNA modification GTPase MnmE (442 aa).

Arg27, Glu84, and Lys124 together coordinate (6S)-5-formyl-5,6,7,8-tetrahydrofolate. One can recognise a TrmE-type G domain in the interval Gly221–Glu366. GTP-binding positions include Asn231–Ser236, Ser250–Thr256, and Asp275–Gly278. Mg(2+)-binding residues include Ser235 and Thr256. Residue Lys442 coordinates (6S)-5-formyl-5,6,7,8-tetrahydrofolate.

The protein belongs to the TRAFAC class TrmE-Era-EngA-EngB-Septin-like GTPase superfamily. TrmE GTPase family. As to quaternary structure, homodimer. Heterotetramer of two MnmE and two MnmG subunits. K(+) is required as a cofactor.

It is found in the cytoplasm. In terms of biological role, exhibits a very high intrinsic GTPase hydrolysis rate. Involved in the addition of a carboxymethylaminomethyl (cmnm) group at the wobble position (U34) of certain tRNAs, forming tRNA-cmnm(5)s(2)U34. The chain is tRNA modification GTPase MnmE from Brucella abortus (strain 2308).